The following is a 128-amino-acid chain: Fluoride-specific ion channel FluC (128 aa).

4 helical membrane passes run 4 to 24 (LLLA…RYLI), 39 to 59 (GTLI…EFSM), 71 to 91 (FLTT…YETI), and 99 to 119 (ITLG…FVVI). Residues G78 and T81 each contribute to the Na(+) site.

The protein belongs to the fluoride channel Fluc/FEX (TC 1.A.43) family.

Its subcellular location is the cell membrane. The enzyme catalyses fluoride(in) = fluoride(out). Its activity is regulated as follows. Na(+) is not transported, but it plays an essential structural role and its presence is essential for fluoride channel function. Fluoride-specific ion channel. Important for reducing fluoride concentration in the cell, thus reducing its toxicity. This chain is Fluoride-specific ion channel FluC, found in Clostridium perfringens (strain ATCC 13124 / DSM 756 / JCM 1290 / NCIMB 6125 / NCTC 8237 / Type A).